Consider the following 478-residue polypeptide: Glutamine synthetase (478 aa).

An Isoglutamyl lysine isopeptide (Lys-Gln) (interchain with Q-Cter in protein Pup) cross-link involves residue lysine 14. The GS beta-grasp domain occupies 16–100; sequence ENVEYVDIRF…MNFFVHDPFT (85 aa). One can recognise a GS catalytic domain in the interval 108-478; sequence PRNVARKAEN…PYEFSLYYDV (371 aa). Positions 133 and 135 each coordinate Mg(2+). Glutamate 214 is a binding site for ATP. Glutamate 219 and glutamate 227 together coordinate Mg(2+). Residue 230-232 coordinates ATP; that stretch reads YKF. Residues 271 to 272 and glycine 272 contribute to the L-glutamate site; that span reads NG. Residue histidine 276 participates in Mg(2+) binding. Residues 278-280 and serine 280 each bind ATP; that span reads HQS. Residues arginine 329, glutamate 335, and arginine 347 each coordinate L-glutamate. 3 residues coordinate ATP: arginine 347, arginine 352, and lysine 361. Residue glutamate 366 participates in Mg(2+) binding. Arginine 368 provides a ligand contact to L-glutamate. The residue at position 406 (tyrosine 406) is an O-AMP-tyrosine.

It belongs to the glutamine synthetase family. As to quaternary structure, oligomer of 12 subunits arranged in the form of two hexagons. Mg(2+) is required as a cofactor.

It localises to the cytoplasm. The enzyme catalyses L-glutamate + NH4(+) + ATP = L-glutamine + ADP + phosphate + H(+). With respect to regulation, when cellular nitrogen levels are high, the C-terminal adenylyl transferase (AT) of GlnE inhibits GlnA by covalent transfer of an adenylyl group from ATP to Tyr-406. Conversely, when nitrogen levels are low, the N-terminal adenylyl removase (AR) of GlnE activates GlnA by removing the adenylyl group by phosphorolysis. The fully adenylated enzyme complex is inactive. Its function is as follows. Involved in nitrogen metabolism via ammonium assimilation. Catalyzes the ATP-dependent biosynthesis of glutamine from glutamate and ammonia. This is Glutamine synthetase from Mycolicibacterium smegmatis (strain ATCC 700084 / mc(2)155) (Mycobacterium smegmatis).